A 237-amino-acid polypeptide reads, in one-letter code: Platelet-aggregating proteinase PA-BJ (237 aa).

Residues 1–5 constitute a propeptide that is removed on maturation; that stretch reads NSLVI. The Peptidase S1 domain maps to 6 to 229; that stretch reads VVGGRPCKIN…YLPWIESIIA (224 aa). Cystine bridges form between C12-C144, C31-C47, C79-C236, C123-C191, C155-C170, and C181-C205. An N-linked (GlcNAc...) asparagine glycan is attached at N25. S28 is a glycosylation site (O-linked (GalNAc...) serine). Residues H46 and D91 each act as charge relay system in the active site. The active-site Charge relay system is the S185.

It belongs to the peptidase S1 family. Snake venom subfamily. As to quaternary structure, monomer. As to expression, expressed by the venom gland.

Its subcellular location is the secreted. With respect to regulation, inhibited by PMSF. The amidolytic activity is also inhibited by benzamidine derivatives. Its function is as follows. Snake venom serine protease that induces platelet aggregation through activation of protease-activated platelet receptors (PAR1/F2R and PAR4/F2RL3). On F2R, the cleavage occurs at Arg41-Ser42 (like thrombin cleavage), and Arg46-Asn47. In normal condition of hemostasis, the cleavage of the Arg41-Ser42 bond liberates a new N-terminus that functions as an agonist. However after envenomation, the cleavage of Arg46-Asn47 bond degrades this potential agonist. This may explain why the snake protease is less potent than thrombin in causing platelet aggregation and release reaction. On F2RL3, a thrombin-like activity has also been proven by calcium release from lung fibroblasts transfected with this receptor. Possesses amidolytic activities. The polypeptide is Platelet-aggregating proteinase PA-BJ (Bothrops jararaca (Jararaca)).